The primary structure comprises 236 residues: Bax inhibitor 1 (236 aa).

Topologically, residues methionine 1–lysine 29 are cytoplasmic. Residue lysine 7 forms a Glycyl lysine isopeptide (Lys-Gly) (interchain with G-Cter in ubiquitin) linkage. Residues valine 30–valine 50 traverse the membrane as a helical segment. At threonine 51–histidine 52 the chain is on the lumenal side. Residues phenylalanine 53 to alanine 73 traverse the membrane as a helical segment. The Cytoplasmic portion of the chain corresponds to threonine 74–glycine 86. The chain crosses the membrane as a helical span at residues leucine 87–isoleucine 107. Over alanine 108–serine 112 the chain is Lumenal. Residues isoleucine 113–leucine 133 traverse the membrane as a helical segment. The Cytoplasmic segment spans residues tyrosine 134–serine 139. The chain crosses the membrane as a helical span at residues tyrosine 140–glycine 160. Residues asparagine 161 to serine 166 lie on the Lumenal side of the membrane. A helical membrane pass occupies residues valine 167–phenylalanine 187. Topologically, residues aspartate 188–histidine 206 are cytoplasmic. Residues cysteine 207–methionine 227 constitute an intramembrane region (helical). Residues asparagine 228–lysine 236 are Cytoplasmic-facing.

This sequence belongs to the BI1 family. As to quaternary structure, interacts with BCL2 and BCL2L1. Interacts with ERN1. Post-translationally, ubiquitinated by BFAR, leading to proteasomal degradation.

The protein localises to the endoplasmic reticulum membrane. Endoplasmic reticulum (ER)-resident protein that confers cellular protection as an anti-apoptotic protein by limiting multiple stress-inducing pathways surrounding the endoplasmic reticulum and mitochondria. Inhibits the activities of the key sensor for the endoplasmic reticulum unfolded protein response IRE1alpha/ERN1 both directly and by blocking BAX/BAK binding. Modulates ER calcium homeostasis by acting as a calcium-leak channel. Negatively regulates autophagy and autophagosome formation, especially during periods of nutrient deprivation, and reduces cell survival during starvation. The polypeptide is Bax inhibitor 1 (TMBIM6) (Bos taurus (Bovine)).